The following is a 301-amino-acid chain: Cell division protein kinase 2 homolog CRK1 (301 aa).

The 293-residue stretch at 5-297 (YERQEKIGEG…AADALNHPYF (293 aa)) folds into the Protein kinase domain. Residues 11-19 (IGEGTYGVV) and K34 each bind ATP. The Proton acceptor role is filled by D127. Residue T160 is modified to Phosphothreonine; by CAK.

This sequence belongs to the protein kinase superfamily. CMGC Ser/Thr protein kinase family. CDC2/CDKX subfamily. In terms of assembly, forms a stable but non-covalent complex with a regulatory subunit and with a cyclin.

The catalysed reaction is [DNA-directed RNA polymerase] + ATP = phospho-[DNA-directed RNA polymerase] + ADP + H(+). Its activity is regulated as follows. Phosphorylation at Thr-15 or Tyr-16 inactivates the enzyme, while phosphorylation at Thr-160 activates it. May be involved in some stage-specific role in the promastigote cell cycle. In Leishmania mexicana, this protein is Cell division protein kinase 2 homolog CRK1 (CRK1).